The primary structure comprises 341 residues: MLKEIYLSLSLVLVFACGLLYQLTMRSQCFFACLPPFSFPQGLDGLLRSGRSIMFIETSERVEPPPMVSCAVESAAKIYPEQPIIFFMKGLRDSVQLTSNTSYPAFSLLSAINNVFFVPLDMERLFKDTPLFSWYTKVNSSTEKHWLHVSSDAARLAIIWKYGGIYMDTDVISLQPIPEENFLAAQGSRHSSNGVFGFLPHHPFLWACMENFVEHYDSTIWGNQGPQLMTRMLRVWCRLKDFHGLGDLKCLNISFLHPQRFYPIPYPQWKRYYQVWDKEPSFNESYALHLWNYMNKEGKTVVRGSKTLVENLYQKHCPKTYRVLIQGAEGTVSKKPGTGSR.

Over 1–4 the chain is Cytoplasmic; that stretch reads MLKE. Residues 5 to 25 form a helical; Signal-anchor for type II membrane protein membrane-spanning segment; sequence IYLSLSLVLVFACGLLYQLTM. Topologically, residues 26-341 are lumenal; the sequence is RSQCFFACLP…VSKKPGTGSR (316 aa). An N-linked (GlcNAc...) asparagine glycan is attached at Asn-100. A DXD motif motif is present at residues 168–170; it reads DTD.

The protein belongs to the glycosyltransferase 32 family.

The protein localises to the golgi apparatus membrane. The protein operates within protein modification; protein glycosylation. Catalyzes the transfer of N-acetylglucosamine (GlcNAc) to core 2 branched O-glycans. Necessary for the synthesis of type III mucin which is specifically produced in the stomach, duodenum, and pancreatic duct. May protect against inflammation-associated gastric adenocarcinoma. The sequence is that of Alpha-1,4-N-acetylglucosaminyltransferase from Mus musculus (Mouse).